Consider the following 127-residue polypeptide: Mitochondrial pyruvate carrier 2 (127 aa).

The Mitochondrial matrix segment spans residues 2–40 (SAAGARGLRATYHRLLDKVELMLPEKLRPLYNHPAGPRT). A helical membrane pass occupies residues 41–61 (VFFWAPIMKWGLVCAGLADMA). Over 62-72 (RPAEKLSTAQS) the chain is Mitochondrial intermembrane. The helical transmembrane segment at 73–90 (AVLMATGFIWSRYSLVII) threads the bilayer. Residues 91-95 (PKNWS) lie on the Mitochondrial matrix side of the membrane. Residues 96–115 (LFAVNFFVGAAGASQLFRIW) form a helical membrane-spanning segment. Over 116–127 (RYNQELKAKAHK) the chain is Mitochondrial intermembrane.

It belongs to the mitochondrial pyruvate carrier (MPC) (TC 2.A.105) family. As to quaternary structure, homodimer. Homooligomer. Forms heterodimers with MPC1 and MPC1L. The heterodimer is the more stable and dominant form.

The protein resides in the mitochondrion inner membrane. The enzyme catalyses pyruvate(out) + H(+)(out) = pyruvate(in) + H(+)(in). In terms of biological role, mediates the uptake of pyruvate into mitochondria. This Homo sapiens (Human) protein is Mitochondrial pyruvate carrier 2 (MPC2).